Reading from the N-terminus, the 197-residue chain is ATP synthase subunit delta (197 aa).

The segment covering 1–16 (MSSAVSASPQAASPQQ) has biased composition (low complexity). Positions 1–20 (MSSAVSASPQAASPQQDRTS) are disordered.

It belongs to the ATPase delta chain family. F-type ATPases have 2 components, F(1) - the catalytic core - and F(0) - the membrane proton channel. F(1) has five subunits: alpha(3), beta(3), gamma(1), delta(1), epsilon(1). F(0) has three main subunits: a(1), b(2) and c(10-14). The alpha and beta chains form an alternating ring which encloses part of the gamma chain. F(1) is attached to F(0) by a central stalk formed by the gamma and epsilon chains, while a peripheral stalk is formed by the delta and b chains.

It localises to the cell inner membrane. F(1)F(0) ATP synthase produces ATP from ADP in the presence of a proton or sodium gradient. F-type ATPases consist of two structural domains, F(1) containing the extramembraneous catalytic core and F(0) containing the membrane proton channel, linked together by a central stalk and a peripheral stalk. During catalysis, ATP synthesis in the catalytic domain of F(1) is coupled via a rotary mechanism of the central stalk subunits to proton translocation. Functionally, this protein is part of the stalk that links CF(0) to CF(1). It either transmits conformational changes from CF(0) to CF(1) or is implicated in proton conduction. The polypeptide is ATP synthase subunit delta (Acidiphilium cryptum (strain JF-5)).